Reading from the N-terminus, the 792-residue chain is LPS-assembly protein LptD (792 aa).

Positions 1–22 (MYRVLRLLPLPLSVAISLSALA) are cleaved as a signal peptide.

Belongs to the LptD family. As to quaternary structure, component of the lipopolysaccharide transport and assembly complex. Interacts with LptE and LptA.

The protein localises to the cell outer membrane. In terms of biological role, together with LptE, is involved in the assembly of lipopolysaccharide (LPS) at the surface of the outer membrane. The chain is LPS-assembly protein LptD from Xylella fastidiosa (strain 9a5c).